A 578-amino-acid chain; its full sequence is Putative multidrug export ATP-binding/permease protein SAB1799c (578 aa).

Topologically, residues 1-15 are cytoplasmic; it reads MIKRYLQFVKPYKYR. The chain crosses the membrane as a helical span at residues 16–36; sequence IFATIIVGIIKFGIPMLIPLL. In terms of domain architecture, ABC transmembrane type-1 spans 16–306; sequence IFATIIVGII…LVASFTTLTQ (291 aa). The Extracellular segment spans residues 37 to 59; the sequence is IKYAIDGVINNHALTTDEKVHHL. The helical transmembrane segment at 60–80 threads the bilayer; it reads TIAIGIALFIFVIVRPPIEFI. Residues 81–138 lie on the Cytoplasmic side of the membrane; sequence RQYLAQWTSNKILYDIRKKLYNHLQALSARFYANNQVGQVISRVINDVEQTKDFILTG. The chain crosses the membrane as a helical span at residues 139–159; sequence LMNIWLDCITIIIALSIMFFL. Over 160–162 the chain is Extracellular; that stretch reads DVK. A helical membrane pass occupies residues 163 to 183; that stretch reads LTLAALFIFPFYILTVYVFFG. Residues 184 to 242 lie on the Cytoplasmic side of the membrane; that stretch reads RLRKLTRERSQALAEVQGFLHERVQGISVVKSFAIEDNEAKNFDKKNANFLTRALKHTR. A helical membrane pass occupies residues 243 to 262; that stretch reads WNAYSFATINTVTDIGPIIV. At 263-267 the chain is on the extracellular side; that stretch reads IGVGA. A helical membrane pass occupies residues 268–287; sequence YLAISGSITVGTLAAFVGYL. Residues 288–578 lie on the Cytoplasmic side of the membrane; that stretch reads ELLFGPLRRL…YEHLYSIQNL (291 aa). One can recognise an ABC transporter domain in the interval 340–575; the sequence is IDIYHVNFQY…QGAYEHLYSI (236 aa). Residue 374–381 coordinates ATP; the sequence is GMSGGGKS.

The protein belongs to the ABC transporter superfamily. Homodimer.

It localises to the cell membrane. Functionally, may be involved in multidrug export. Transmembrane domains (TMD) form a pore in the cell membrane and the ATP-binding domain (NBD) is responsible for energy generation. This is Putative multidrug export ATP-binding/permease protein SAB1799c from Staphylococcus aureus (strain bovine RF122 / ET3-1).